We begin with the raw amino-acid sequence, 182 residues long: Troponin I, fast skeletal muscle (182 aa).

At Gly-2 the chain carries N-acetylglycine. The involved in binding TNC stretch occupies residues 2–48 (GDEEKRNRAITARRQHLKSVMLQIAATELEKEESRRESEKENYLSEH). Thr-12 is subject to Phosphothreonine. Residues 29–45 (ELEKEESRRESEKENYL) show a composition bias toward basic and acidic residues. The interval 29–53 (ELEKEESRRESEKENYLSEHCPPLH) is disordered. Positions 97-117 (NQKLFDLRGKFKRPPLRRVRM) are involved in binding TNC and actin. At Ser-118 the chain carries Phosphoserine.

It belongs to the troponin I family. In terms of assembly, binds to actin and tropomyosin.

Its function is as follows. Troponin I is the inhibitory subunit of troponin, the thin filament regulatory complex which confers calcium-sensitivity to striated muscle actomyosin ATPase activity. This chain is Troponin I, fast skeletal muscle (Tnni2), found in Mus musculus (Mouse).